A 362-amino-acid polypeptide reads, in one-letter code: Anthranilate phosphoribosyltransferase (362 aa).

Residues Gly96, 99-100 (GD), Thr104, 106-109 (NIST), 124-132 (KHGNRAASS), and Gly136 contribute to the 5-phospho-alpha-D-ribose 1-diphosphate site. Residue Gly96 participates in anthranilate binding. Residue Ser108 participates in Mg(2+) binding. Anthranilate is bound at residue Asn127. Arg182 is a binding site for anthranilate. Mg(2+) contacts are provided by Asp240 and Glu241.

The protein belongs to the anthranilate phosphoribosyltransferase family. Homodimer. It depends on Mg(2+) as a cofactor.

The enzyme catalyses N-(5-phospho-beta-D-ribosyl)anthranilate + diphosphate = 5-phospho-alpha-D-ribose 1-diphosphate + anthranilate. The protein operates within amino-acid biosynthesis; L-tryptophan biosynthesis; L-tryptophan from chorismate: step 2/5. Its function is as follows. Catalyzes the transfer of the phosphoribosyl group of 5-phosphorylribose-1-pyrophosphate (PRPP) to anthranilate to yield N-(5'-phosphoribosyl)-anthranilate (PRA). In Rhodococcus jostii (strain RHA1), this protein is Anthranilate phosphoribosyltransferase.